Consider the following 338-residue polypeptide: Tryptophan--tRNA ligase (338 aa).

ATP contacts are provided by residues 11-13 (QPS) and 19-20 (GN). The short motif at 12-20 (PSGELSIGN) is the 'HIGH' region element. An L-tryptophan-binding site is contributed by aspartate 135. ATP is bound by residues 147–149 (GSD), valine 189, and 198–202 (KMSKS). The 'KMSKS' region motif lies at 198-202 (KMSKS).

Belongs to the class-I aminoacyl-tRNA synthetase family. In terms of assembly, homodimer.

The protein localises to the cytoplasm. It carries out the reaction tRNA(Trp) + L-tryptophan + ATP = L-tryptophyl-tRNA(Trp) + AMP + diphosphate + H(+). Its function is as follows. Catalyzes the attachment of tryptophan to tRNA(Trp). This is Tryptophan--tRNA ligase from Aliivibrio fischeri (strain ATCC 700601 / ES114) (Vibrio fischeri).